A 462-amino-acid chain; its full sequence is Glutamate decarboxylase alpha (462 aa).

Lys-273 is subject to N6-(pyridoxal phosphate)lysine.

This sequence belongs to the group II decarboxylase family. Pyridoxal 5'-phosphate serves as cofactor.

The catalysed reaction is L-glutamate + H(+) = 4-aminobutanoate + CO2. Converts internalized glutamate to GABA and increases the internal pH. Involved in glutamate-dependent acid resistance in gastric fluid. The polypeptide is Glutamate decarboxylase alpha (gadA) (Listeria monocytogenes serovar 1/2a (strain ATCC BAA-679 / EGD-e)).